The primary structure comprises 597 residues: Phosphoinositide phospholipase C 4 (597 aa).

One can recognise an EF-hand domain in the interval 26–60 (GPVEDVRDLFEKYTEGDAHMSPEQLQKLMTEEGGE). Residues 114 to 257 (QNMDAPLSHY…LKEKILISTK (144 aa)) form the PI-PLC X-box domain. Active-site residues include H129 and H174. A compositionally biased stretch (basic and acidic residues) spans 259 to 290 (PKEYLEANDTKEKDNGEKGKDSDEDVWGKEPE). The tract at residues 259–324 (PKEYLEANDT…ERGSCESDTS (66 aa)) is disordered. Polar residues predominate over residues 293–309 (ISTQSDLDKVTSSVNDL). Residues 333 to 449 (KRLIAIHAGK…GYVKKPDFLM (117 aa)) form the PI-PLC Y-box domain. The C2 domain occupies 449–579 (MDASPNGQDF…QGIRAVPLFN (131 aa)).

The cofactor is Ca(2+). As to expression, low expression in leaves, roots, flowers and siliques. Expressed in pollen and in cells of the stigma surface.

The protein localises to the cytoplasm. The protein resides in the cytosol. It is found in the cell membrane. The catalysed reaction is a 1,2-diacyl-sn-glycero-3-phospho-(1D-myo-inositol-4,5-bisphosphate) + H2O = 1D-myo-inositol 1,4,5-trisphosphate + a 1,2-diacyl-sn-glycerol + H(+). In terms of biological role, the production of the second messenger molecules diacylglycerol (DAG) and inositol 1,4,5-trisphosphate (IP3) is mediated by activated phosphatidylinositol-specific phospholipase C enzymes. The polypeptide is Phosphoinositide phospholipase C 4 (PLC4) (Arabidopsis thaliana (Mouse-ear cress)).